A 367-amino-acid polypeptide reads, in one-letter code: D-alanine--D-alanine ligase (367 aa).

Residues 150-357 (KKLLTAAGLP…YPTLLATMVE (208 aa)) form the ATP-grasp domain. Residue 178–233 (RERLGLPVFVKPSRGGSSIGVSRVTAWDALPAAIELARRHDPKVIVEAAIPGRELE) coordinates ATP. The Mg(2+) site is built by D312, E324, and N326.

The protein belongs to the D-alanine--D-alanine ligase family. Requires Mg(2+) as cofactor. Mn(2+) is required as a cofactor.

It is found in the cytoplasm. It carries out the reaction 2 D-alanine + ATP = D-alanyl-D-alanine + ADP + phosphate + H(+). Its pathway is cell wall biogenesis; peptidoglycan biosynthesis. Its function is as follows. Cell wall formation. This Mycolicibacterium vanbaalenii (strain DSM 7251 / JCM 13017 / BCRC 16820 / KCTC 9966 / NRRL B-24157 / PYR-1) (Mycobacterium vanbaalenii) protein is D-alanine--D-alanine ligase.